Reading from the N-terminus, the 35-residue chain is Alpha-amanitin proprotein 2 (35 aa).

Residues 1–10 constitute a propeptide that is removed on maturation; that stretch reads MFDTNSTRLP. A (3R,4R)-4,5-dihydroxyisoleucine; in form alpha-amanitin modification is found at Ile11. The residue at position 11 (Ile11) is a (3R,4S)-4-hydroxyisoleucine; in form gamma-amanitin. The segment at residues 11-18 is a cross-link (cyclopeptide (Ile-Pro)); sequence IWGIGCNP. The 2'-cysteinyl-6'-hydroxytryptophan sulfoxide (Trp-Cys) cross-link spans 12-16; sequence WGIGC. Pro18 bears the 4-hydroxyproline mark. Residues 19-35 constitute a propeptide that is removed on maturation; the sequence is WTAEHVDQTLVSGNDIC.

The protein belongs to the MSDIN fungal toxin family. In terms of processing, processed by the macrocyclase-peptidase enzyme POPB to yield a toxic bicyclic octapeptide. POPB first removes 10 residues from the N-terminus. Conformational trapping of the remaining peptide forces the enzyme to release this intermediate rather than proceed to macrocyclization. The enzyme rebinds the remaining peptide in a different conformation and catalyzes macrocyclization of the N-terminal 8 residues.

In terms of biological role, major toxin belonging to the bicyclic octapeptides amatoxins that acts by binding non-competitively to RNA polymerase II and greatly slowing the elongation of transcripts from target promoters. In Galerina marginata (strain CBS 339.88), this protein is Alpha-amanitin proprotein 2.